Reading from the N-terminus, the 70-residue chain is Large ribosomal subunit protein bL31 (70 aa).

Zn(2+)-binding residues include Cys16, Cys18, Cys37, and Cys40.

The protein belongs to the bacterial ribosomal protein bL31 family. Type A subfamily. Part of the 50S ribosomal subunit. It depends on Zn(2+) as a cofactor.

Functionally, binds the 23S rRNA. The polypeptide is Large ribosomal subunit protein bL31 (Klebsiella pneumoniae (strain 342)).